The primary structure comprises 390 residues: 23S rRNA (uracil(747)-C(5))-methyltransferase RlmC (390 aa).

[4Fe-4S] cluster contacts are provided by Cys-12, Cys-20, Cys-23, and Cys-100. 4 residues coordinate S-adenosyl-L-methionine: Gln-225, Phe-254, Glu-275, and Asn-322. The Nucleophile role is filled by Cys-349.

This sequence belongs to the class I-like SAM-binding methyltransferase superfamily. RNA M5U methyltransferase family. RlmC subfamily.

It catalyses the reaction uridine(747) in 23S rRNA + S-adenosyl-L-methionine = 5-methyluridine(747) in 23S rRNA + S-adenosyl-L-homocysteine + H(+). Catalyzes the formation of 5-methyl-uridine at position 747 (m5U747) in 23S rRNA. This chain is 23S rRNA (uracil(747)-C(5))-methyltransferase RlmC, found in Shewanella baltica (strain OS155 / ATCC BAA-1091).